A 124-amino-acid polypeptide reads, in one-letter code: Acidic phospholipase A2 (124 aa).

7 cysteine pairs are disulfide-bonded: Cys26/Cys116, Cys28/Cys44, Cys43/Cys95, Cys49/Cys124, Cys50/Cys88, Cys57/Cys81, and Cys75/Cys86. Tyr27, Gly29, and Gly31 together coordinate Ca(2+). His47 is an active-site residue. Asp48 contributes to the Ca(2+) binding site. Asp89 is a catalytic residue.

The protein belongs to the phospholipase A2 family. Group II subfamily. D49 sub-subfamily. It depends on Ca(2+) as a cofactor. Expressed by the venom gland.

The protein localises to the secreted. It carries out the reaction a 1,2-diacyl-sn-glycero-3-phosphocholine + H2O = a 1-acyl-sn-glycero-3-phosphocholine + a fatty acid + H(+). Snake venom phospholipase A2 (PLA2) that inhibits ADP-induced platelet aggregation. PLA2 catalyzes the calcium-dependent hydrolysis of the 2-acyl groups in 3-sn-phosphoglycerides. This Gloydius ussuriensis (Ussuri mamushi) protein is Acidic phospholipase A2.